The sequence spans 377 residues: MQRSPPGYGAQDDPPSRRDCAWAPGIGAAAEARGLPVTNVSPTSPASPSSLPRSPPRSPESGRYGFGRGERQTADELRIRRPMNAFMVWAKDERKRLAQQNPDLHNAVLSKMLGKAWKELNTAEKRPFVEEAERLRVQHLRDHPNYKYRPRRKKQARKVRRLEPGLLLPGLVQPSAPPEAFAAASGSARSFRELPTLGAEFDGLGLPTPERSPLDGLEPGEASFFPPPLAPEDCALRAFRAPYAPELARDPSFCYGAPLAEALRTAPPAAPLAGLYYGTLGTPGPFPNPLSPPPESPSLEGTEQLEPTADLWADVDLTEFDQYLNCSRTRPDATTLPYHVALAKLGPRAMSCPEESSLISALSDASSAVYYSACISG.

Residues 1-76 (MQRSPPGYGA…GRGERQTADE (76 aa)) form a disordered region. Composition is skewed to low complexity over residues 21–34 (AWAP…EARG) and 41–52 (SPTSPASPSSLP). Positions 79 to 147 (IRRPMNAFMV…QHLRDHPNYK (69 aa)) form a DNA-binding region, HMG box. 2 interaction with DNA regions span residues 81–94 (RPMN…KDER) and 105–117 (HNAV…GKAW). Residues 160 to 225 (RRLEPGLLLP…GLEPGEASFF (66 aa)) form an important for transcriptional activation region. One can recognise a Sox C-terminal domain in the interval 256-376 (GAPLAEALRT…SAVYYSACIS (121 aa)). The 9aaTAD motif lies at 318–326 (TEFDQYLNC).

In terms of assembly, interacts (via C-terminus) with MEF2C (via MADS box). As to expression, detected in adult lung, heart and skeletal muscles.

The protein resides in the nucleus. Transcriptional activator that binds to the consensus sequence 5'-AACAAAG-3' in the promoter of target genes and plays an essential role in embryonic cardiovascular development and lymphangiogenesis. Activates transcription of PROX1 and other genes coding for lymphatic endothelial markers. Plays an essential role in triggering the differentiation of lymph vessels, but is not required for the maintenance of differentiated lymphatic endothelial cells. Plays an important role in postnatal angiogenesis, where it is functionally redundant with SOX17. Interaction with MEF2C enhances transcriptional activation. Besides, required for normal hair development. The sequence is that of Transcription factor SOX-18 (Sox18) from Mus musculus (Mouse).